Reading from the N-terminus, the 219-residue chain is Probable oxidoreductase virH (219 aa).

It belongs to the oxidoreductase OpS7 family.

It participates in secondary metabolite biosynthesis. Its function is as follows. Probable oxidoreductase; part of the gene cluster that mediates the biosynthesis of virensols and trichoxide, fungal natural products that contain or are derived from a salicylaldehyde core. The pathway begins with the synthesis of the reduced chain in virensol C by the highly reducing polyketide synthase virA via condensation of one acetate and 8 malonate units. VirA has interesting programming rules since the first 2 ketides are fully reduced, the 3 following ketides undergo beta-dehydration, and the last 3 ketides are only reduced to beta-hydroxys to yield the trihydroxy portion. The production of aldehyde virensol C by virA alone is surprising, since virA does not contain a reductase (R) domain that is typically associated with reductive product release in HRPKS. The cupin-domain enzyme virC is involved in enhancing virA product turnover. The short-chain dehydrogenase virB then oxidizes the C-7 alcohol of virensol C to a ketone, yielding virensol D. Virensol D is further transformed to salicylaldehyde 5-deoxyaurocitrin by the short-chain dehydrogenase virD. VirD catalyzes the dehydrogenation of C-3 to form the beta-ketone aldehyde, which is followed by the generation of the nucleophilic C-2 that is required for the intramolecular aldol condensation between C-2 and C-7, itself followed by dehydration and aromatization which leads to salicylaldehyde 5-deoxyaurocitrin. While the dehydrogenation of virensol D is definitely catalyzed by virD, the aldol condensation and dehydration may be uncatalyzed or assisted by virD. The short chain dehydrogenase virG then converts salicylaldehyde 5-deoxyaurocitrin into virensol B which is further hydroxylated by the cytochrome P450 monooxygenase virE to yield the hydroquinone virensol A. VirI then may oxidize virensol A to form the quinone, while virH performs the epoxidation. Finally, the two remaining short-chain dehydrogenases, virK and virL, are probably responsible for reducing the ketones to the corresponding alcohols to furnish the epoxycyclohexanol structure in trichoxide. This is Probable oxidoreductase virH from Hypocrea virens (strain Gv29-8 / FGSC 10586) (Gliocladium virens).